We begin with the raw amino-acid sequence, 1089 residues long: Platelet-derived growth factor receptor alpha (1089 aa).

The signal sequence occupies residues 1-23 (MGTSHPAFLVLGCLLTGLSLILC). 5 consecutive Ig-like C2-type domains span residues 24–113 (QLSL…NELE), 117–201 (IYIY…FQTI), 202–306 (PFNV…KKVT), 319–410 (PTFS…FELL), and 414–517 (PSSI…LKLV). The Extracellular portion of the chain corresponds to 24-528 (QLSLPSILPN…PTLRSELTVA (505 aa)). Asparagine 42, asparagine 76, asparagine 103, and asparagine 179 each carry an N-linked (GlcNAc...) asparagine glycan. An intrachain disulfide couples cysteine 49 to cysteine 100. Disulfide bonds link cysteine 150-cysteine 189 and cysteine 235-cysteine 290. N-linked (GlcNAc...) asparagine glycosylation is found at asparagine 353, asparagine 359, asparagine 458, and asparagine 468. An intrachain disulfide couples cysteine 435 to cysteine 501. Residues 529-549 (AAVLVLLVIVIISLIVLVVIW) form a helical membrane-spanning segment. Over 550–1089 (KQKPRYEIRW…SSDLVEDSFL (540 aa)) the chain is Cytoplasmic. Phosphotyrosine; by autocatalysis is present on residues tyrosine 572 and tyrosine 574. Positions 593–954 (LVLGRVLGSG…HLSEIVENLL (362 aa)) constitute a Protein kinase domain. ATP-binding positions include 599 to 607 (LGSGAFGKV) and lysine 627. A phosphotyrosine; by autocatalysis mark is found at tyrosine 720, tyrosine 731, tyrosine 742, tyrosine 754, tyrosine 762, and tyrosine 768. Aspartate 818 functions as the Proton acceptor in the catalytic mechanism. Phosphotyrosine; by autocatalysis occurs at positions 849, 988, and 1018. The tract at residues 1018-1089 (YIIPLPDIDP…SSDLVEDSFL (72 aa)) is disordered. A compositionally biased stretch (polar residues) spans 1041-1059 (SSQTSEESAIETGSSSSTF). A compositionally biased stretch (acidic residues) spans 1065-1089 (ETIEDIDMMDDIGIDSSDLVEDSFL).

The protein belongs to the protein kinase superfamily. Tyr protein kinase family. CSF-1/PDGF receptor subfamily. In terms of assembly, interacts with homodimeric PDGFA, PDGFB and PDGFC, and with heterodimers formed by PDGFA and PDGFB. Monomer in the absence of bound ligand. Interaction with dimeric PDGFA, PDGFB and/or PDGFC leads to receptor dimerization, where both PDGFRA homodimers and heterodimers with PDGFRB are observed. Interacts (tyrosine phosphorylated) with SHB (via SH2 domain). Interacts (tyrosine phosphorylated) with SHF (via SH2 domain). Interacts (tyrosine phosphorylated) with SRC (via SH2 domain). Interacts (tyrosine phosphorylated) with PIK3R1. Interacts (tyrosine phosphorylated) with PLCG1 (via SH2 domain). Interacts (tyrosine phosphorylated) with CRK, GRB2 and GRB7. Interacts with CD248; this interaction promotes PDGF receptor signaling pathway. (Microbial infection) Interacts with human cytomegalovirus/HHV-5 envelope glycoprotein B/gB. Also interacts with the trimeric complex gH-gL-gO. Trimer-PDGFRA interaction has an inhibitory effect on PDGFRA signaling. N-glycosylated. In terms of processing, ubiquitinated, leading to its internalization and degradation. Post-translationally, autophosphorylated on tyrosine residues upon ligand binding. Autophosphorylation occurs in trans, i.e. one subunit of the dimeric receptor phosphorylates tyrosine residues on the other subunit. Phosphorylation at Tyr-731 and Tyr-742 is important for interaction with PIK3R1. Phosphorylation at Tyr-720 and Tyr-754 is important for interaction with PTPN11. Phosphorylation at Tyr-762 is important for interaction with CRK. Phosphorylation at Tyr-572 and Tyr-574 is important for interaction with SRC and SRC family members. Phosphorylation at Tyr-988 and Tyr-1018 is important for interaction with PLCG1. As to expression, detected in platelets (at protein level). Widely expressed. Detected in brain, fibroblasts, smooth muscle, heart, and embryo. Expressed in primary and metastatic colon tumors and in normal colon tissue.

The protein resides in the cell membrane. It is found in the cell projection. Its subcellular location is the cilium. The protein localises to the golgi apparatus. It catalyses the reaction L-tyrosyl-[protein] + ATP = O-phospho-L-tyrosyl-[protein] + ADP + H(+). Present in an inactive conformation in the absence of bound ligand. Binding of PDGFA and/or PDGFB leads to dimerization and activation by autophosphorylation on tyrosine residues. Inhibited by imatinib, nilotinib and sorafenib. Its function is as follows. Tyrosine-protein kinase that acts as a cell-surface receptor for PDGFA, PDGFB and PDGFC and plays an essential role in the regulation of embryonic development, cell proliferation, survival and chemotaxis. Depending on the context, promotes or inhibits cell proliferation and cell migration. Plays an important role in the differentiation of bone marrow-derived mesenchymal stem cells. Required for normal skeleton development and cephalic closure during embryonic development. Required for normal development of the mucosa lining the gastrointestinal tract, and for recruitment of mesenchymal cells and normal development of intestinal villi. Plays a role in cell migration and chemotaxis in wound healing. Plays a role in platelet activation, secretion of agonists from platelet granules, and in thrombin-induced platelet aggregation. Binding of its cognate ligands - homodimeric PDGFA, homodimeric PDGFB, heterodimers formed by PDGFA and PDGFB or homodimeric PDGFC -leads to the activation of several signaling cascades; the response depends on the nature of the bound ligand and is modulated by the formation of heterodimers between PDGFRA and PDGFRB. Phosphorylates PIK3R1, PLCG1, and PTPN11. Activation of PLCG1 leads to the production of the cellular signaling molecules diacylglycerol and inositol 1,4,5-trisphosphate, mobilization of cytosolic Ca(2+) and the activation of protein kinase C. Phosphorylates PIK3R1, the regulatory subunit of phosphatidylinositol 3-kinase, and thereby mediates activation of the AKT1 signaling pathway. Mediates activation of HRAS and of the MAP kinases MAPK1/ERK2 and/or MAPK3/ERK1. Promotes activation of STAT family members STAT1, STAT3 and STAT5A and/or STAT5B. Receptor signaling is down-regulated by protein phosphatases that dephosphorylate the receptor and its down-stream effectors, and by rapid internalization of the activated receptor. The protein is Platelet-derived growth factor receptor alpha (PDGFRA) of Homo sapiens (Human).